A 167-amino-acid polypeptide reads, in one-letter code: Transmembrane protein 229B (167 aa).

Residues 1–14 (MASAEPLTALSRWY) lie on the Cytoplasmic side of the membrane. Residues 15-35 (LYAIHGYFCEVMFTAAWEFVV) traverse the membrane as a helical segment. Topologically, residues 36–40 (NFNWK) are extracellular. A helical transmembrane segment spans residues 41 to 61 (FPGVTSVWALFIYGTSILIVE). Residues 62-73 (RMYLRLRGRCPL) lie on the Cytoplasmic side of the membrane. The chain crosses the membrane as a helical span at residues 74-94 (LLRCLIYTLWTYLWEFTTGFI). Over 95 to 111 (LRQFNACPWDYSQFDFD) the chain is Extracellular. A helical transmembrane segment spans residues 112–132 (FMGLITLEYAVPWFCGALLVE). Topologically, residues 133–167 (QFVIRNTLRLRFDKDAEPGEPSGALALANGHVKTD) are cytoplasmic.

This sequence belongs to the TMEM229 family.

It localises to the membrane. In Bos taurus (Bovine), this protein is Transmembrane protein 229B (TMEM229B).